The following is a 496-amino-acid chain: Chromosomal replication initiator protein DnaA (496 aa).

Residues 1-76 (MKMDSAVSEE…TELWQEENPQ (76 aa)) form a domain I, interacts with DnaA modulators region. Residues 76–150 (QILKVEVVVR…AAATDAVLGS (75 aa)) are domain II. Positions 151–373 (PLDPRYTFDT…GAFNQLLFRQ (223 aa)) are domain III, AAA+ region. Residues glycine 197, glycine 199, lysine 200, and threonine 201 each contribute to the ATP site. A domain IV, binds dsDNA region spans residues 374-496 (SFEPNISIDR…LKRLINDQAA (123 aa)).

It belongs to the DnaA family. Oligomerizes as a right-handed, spiral filament on DNA at oriC.

The protein resides in the cytoplasm. Plays an essential role in the initiation and regulation of chromosomal replication. ATP-DnaA binds to the origin of replication (oriC) to initiate formation of the DNA replication initiation complex once per cell cycle. Binds the DnaA box (a 9 base pair repeat at the origin) and separates the double-stranded (ds)DNA. Forms a right-handed helical filament on oriC DNA; dsDNA binds to the exterior of the filament while single-stranded (ss)DNA is stabiized in the filament's interior. The ATP-DnaA-oriC complex binds and stabilizes one strand of the AT-rich DNA unwinding element (DUE), permitting loading of DNA polymerase. After initiation quickly degrades to an ADP-DnaA complex that is not apt for DNA replication. Binds acidic phospholipids. The chain is Chromosomal replication initiator protein DnaA from Brucella suis biovar 1 (strain 1330).